The chain runs to 363 residues: Putative agmatine deiminase (363 aa).

Over residues 1-10 (MTKQLSTSPK) the composition is skewed to polar residues. The interval 1-20 (MTKQLSTSPKQDGFRMPAEH) is disordered. Catalysis depends on Cys355, which acts as the Amidino-cysteine intermediate.

It belongs to the agmatine deiminase family.

It carries out the reaction agmatine + H2O = N-carbamoylputrescine + NH4(+). This chain is Putative agmatine deiminase, found in Photobacterium profundum (strain SS9).